The sequence spans 131 residues: Small ribosomal subunit protein bS6 (131 aa).

A disordered region spans residues 98–131 (EASPMVKAKDERRERRDDFANETADDAEAGDSEE). Basic and acidic residues predominate over residues 104–116 (KAKDERRERRDDF). Positions 120 to 131 (TADDAEAGDSEE) are enriched in acidic residues.

This sequence belongs to the bacterial ribosomal protein bS6 family.

In terms of biological role, binds together with bS18 to 16S ribosomal RNA. The sequence is that of Small ribosomal subunit protein bS6 from Cronobacter sakazakii (strain ATCC BAA-894) (Enterobacter sakazakii).